The following is a 312-amino-acid chain: Porphobilinogen deaminase (312 aa).

Position 241 is an S-(dipyrrolylmethanemethyl)cysteine (Cys-241).

It belongs to the HMBS family. In terms of assembly, monomer. Dipyrromethane is required as a cofactor.

The catalysed reaction is 4 porphobilinogen + H2O = hydroxymethylbilane + 4 NH4(+). The protein operates within porphyrin-containing compound metabolism; protoporphyrin-IX biosynthesis; coproporphyrinogen-III from 5-aminolevulinate: step 2/4. In terms of biological role, tetrapolymerization of the monopyrrole PBG into the hydroxymethylbilane pre-uroporphyrinogen in several discrete steps. The polypeptide is Porphobilinogen deaminase (Cytophaga hutchinsonii (strain ATCC 33406 / DSM 1761 / CIP 103989 / NBRC 15051 / NCIMB 9469 / D465)).